Reading from the N-terminus, the 688-residue chain is UvrABC system protein B (688 aa).

The 158-residue stretch at 31–188 folds into the Helicase ATP-binding domain; it reads GRVNAGEPDV…RKFVSMQYQR (158 aa). 44–51 is a binding site for ATP; it reads GATGTGKS. Positions 97-120 match the Beta-hairpin motif; that stretch reads YYDYYQPEAYVPQTDTFIEKDSSV. Residues 434-587 enclose the Helicase C-terminal domain; the sequence is QIDDLLEQIR…QVAYNTEHGI (154 aa). A disordered region spans residues 607–632; sequence GEDTKKMLEGRGGGKRSPTPNLRREG. The region spanning 642–677 is the UVR domain; that stretch reads ETIISDLNDQMLQAAGELKFELAARLRDELGDLKRE.

This sequence belongs to the UvrB family. Forms a heterotetramer with UvrA during the search for lesions. Interacts with UvrC in an incision complex.

The protein localises to the cytoplasm. The UvrABC repair system catalyzes the recognition and processing of DNA lesions. A damage recognition complex composed of 2 UvrA and 2 UvrB subunits scans DNA for abnormalities. Upon binding of the UvrA(2)B(2) complex to a putative damaged site, the DNA wraps around one UvrB monomer. DNA wrap is dependent on ATP binding by UvrB and probably causes local melting of the DNA helix, facilitating insertion of UvrB beta-hairpin between the DNA strands. Then UvrB probes one DNA strand for the presence of a lesion. If a lesion is found the UvrA subunits dissociate and the UvrB-DNA preincision complex is formed. This complex is subsequently bound by UvrC and the second UvrB is released. If no lesion is found, the DNA wraps around the other UvrB subunit that will check the other stand for damage. The chain is UvrABC system protein B from Clavibacter michiganensis subsp. michiganensis (strain NCPPB 382).